The chain runs to 380 residues: MSDSPIKYRLIKKEKHTGARLGEIITPHGTFPTPMFMPVGTQATVKTQSPEELKEMGSGIILSNTYHLWLRPGDELIARAGGLHKFMNWDQPILTDSGGFQVYSLADSRNITEEGVTFKNHLNGSKMFLSPEKAISIQNNLGSDIMMSFDECPQFYQPYDYVKKSIERTSRWAERGLKAHRRPHDQGLFGIVQGAGFEDLRRQSAHDLVSMDFPGYSIGGLAVGETHEEMNAVLDFTTQLLPENKPRYLMGVGAPDSLIDGVIRGVDMFDCVLPTRIARNGTCMTSQGRLVVKNAQFAEDFTPLDPECDCYTCKNYTRAYLRHLLKADETFGIRLTSYHNLYFLLNLMKQVRQAIMDDNLLEFREYFVEKYGYNKSGRNF.

The active-site Proton acceptor is aspartate 96. Substrate contacts are provided by residues 96–100 (DSGGF), aspartate 150, glutamine 193, and glycine 220. The RNA binding stretch occupies residues 251–257 (GVGAPDS). Residue aspartate 270 is the Nucleophile of the active site. The tract at residues 275–279 (TRIAR) is RNA binding; important for wobble base 34 recognition. 4 residues coordinate Zn(2+): cysteine 308, cysteine 310, cysteine 313, and histidine 339.

Belongs to the queuine tRNA-ribosyltransferase family. As to quaternary structure, homodimer. Within each dimer, one monomer is responsible for RNA recognition and catalysis, while the other monomer binds to the replacement base PreQ1. Zn(2+) serves as cofactor.

The catalysed reaction is 7-aminomethyl-7-carbaguanine + guanosine(34) in tRNA = 7-aminomethyl-7-carbaguanosine(34) in tRNA + guanine. It functions in the pathway tRNA modification; tRNA-queuosine biosynthesis. Its function is as follows. Catalyzes the base-exchange of a guanine (G) residue with the queuine precursor 7-aminomethyl-7-deazaguanine (PreQ1) at position 34 (anticodon wobble position) in tRNAs with GU(N) anticodons (tRNA-Asp, -Asn, -His and -Tyr). Catalysis occurs through a double-displacement mechanism. The nucleophile active site attacks the C1' of nucleotide 34 to detach the guanine base from the RNA, forming a covalent enzyme-RNA intermediate. The proton acceptor active site deprotonates the incoming PreQ1, allowing a nucleophilic attack on the C1' of the ribose to form the product. After dissociation, two additional enzymatic reactions on the tRNA convert PreQ1 to queuine (Q), resulting in the hypermodified nucleoside queuosine (7-(((4,5-cis-dihydroxy-2-cyclopenten-1-yl)amino)methyl)-7-deazaguanosine). This Streptococcus pneumoniae (strain Hungary19A-6) protein is Queuine tRNA-ribosyltransferase.